A 102-amino-acid chain; its full sequence is Large ribosomal subunit protein bL21 (102 aa).

It belongs to the bacterial ribosomal protein bL21 family. In terms of assembly, part of the 50S ribosomal subunit. Contacts protein L20.

This protein binds to 23S rRNA in the presence of protein L20. The chain is Large ribosomal subunit protein bL21 from Pelobacter propionicus (strain DSM 2379 / NBRC 103807 / OttBd1).